The sequence spans 423 residues: Pseudouridylate synthase 1 homolog (423 aa).

Positions 32–75 (AGNKVPPALASHQPDRKGRGGWVWEETEHPAKRVKGGEDEEPPR) are disordered. Positions 57 to 68 (ETEHPAKRVKGG) are enriched in basic and acidic residues. The active-site Nucleophile is the aspartate 142. The tract at residues 403–423 (ADTGAKVPSSLEGSEGDGDTD) is disordered. A phosphoserine mark is found at serine 411 and serine 416. The residue at position 422 (threonine 422) is a Phosphothreonine.

This sequence belongs to the tRNA pseudouridine synthase TruA family. Monomer. Forms a complex with RARG and the SRA1 RNA in the nucleus.

It is found in the nucleus. The protein localises to the cytoplasm. Its subcellular location is the mitochondrion. The catalysed reaction is a uridine in tRNA = a pseudouridine in tRNA. It carries out the reaction uridine(38/39/40) in tRNA = pseudouridine(38/39/40) in tRNA. The enzyme catalyses a uridine in mRNA = a pseudouridine in mRNA. In terms of biological role, pseudouridylate synthase that catalyzes pseudouridylation of tRNAs and mRNAs. Acts on positions 27/28 in the anticodon stem and also positions 34 and 36 in the anticodon of an intron containing tRNA. Also catalyzes pseudouridylation of mRNAs: mediates pseudouridylation of mRNAs with the consensus sequence 5'-UGUAG-3'. Acts as a regulator of pre-mRNA splicing by mediating pseudouridylation of pre-mRNAs at locations associated with alternatively spliced regions. Pseudouridylation of pre-mRNAs near splice sites directly regulates mRNA splicing and mRNA 3'-end processing. Involved in regulation of nuclear receptor activity through pseudouridylation of SRA1 mRNA. Functionally, does not form pseudouridine when expressed in vitro. This chain is Pseudouridylate synthase 1 homolog, found in Mus musculus (Mouse).